The sequence spans 1089 residues: Electroneutral sodium bicarbonate exchanger 1 (1089 aa).

The Extracellular portion of the chain corresponds to 1 to 476 (MPAGSNEPDG…DYRDALSLQC (476 aa)). The disordered stretch occupies residues 55–90 (LGRQSHRHHRTHGQKHRRRGGRGKGASQGEEGLEAL). Positions 58 to 76 (QSHRHHRTHGQKHRRRGGR) are enriched in basic residues. Residues 477 to 497 (LASFLFLYCACMSPVITFGGL) traverse the membrane as a helical segment. The Cytoplasmic portion of the chain corresponds to 498–505 (LGEATEGR). A helical membrane pass occupies residues 506 to 526 (ISAIESLFGASMTGIAYSLFA). The Extracellular portion of the chain corresponds to 527–563 (GQPLTILGSTGPVLVFEKILFKFCKDYALSYLSLRAL). The chain crosses the membrane as a helical span at residues 564–584 (IGLWTAFLCIVLVATDASSLV). The Cytoplasmic segment spans residues 585-593 (CYITRFTEE). A helical transmembrane segment spans residues 594–614 (AFASLICIIFIYEAIEKLIHL). Residues 615-685 (AETYPIHMHS…EFMGSACGHH (71 aa)) are Extracellular-facing. 2 disulfide bridges follow: C634–C682 and C636–C670. An N-linked (GlcNAc) asparagine glycan is attached at N644. Residues 686-706 (GPYTPDVLFWSCILFFATFIV) form a helical membrane-spanning segment. The Cytoplasmic portion of the chain corresponds to 707 to 729 (SSTLKTFKTSRYFPTRVRSMVSD). A helical transmembrane segment spans residues 730 to 750 (FAVFLTIFTMVVLDFLIGVPS). Residues 751–776 (PKLQVPNVFKPTRDDRGWFINPIGPN) lie on the Extracellular side of the membrane. The chain crosses the membrane as a helical span at residues 777–797 (PWWTVIAAIIPALLCTILIFM). Over 798 to 822 (DQQITAVIINRKEHKLKKGCGYHLD) the chain is Cytoplasmic. A helical transmembrane segment spans residues 823-843 (LLMVAVMLGVCSIMGLPWFVA). At 844 to 879 (ATVLSITHVNSLKLESECSAPGEQPKFLGIREQRVT) the chain is on the extracellular side. Residues 880-900 (GLMIFVLMGCSVFMTAVLKFI) form a helical membrane-spanning segment. The Cytoplasmic segment spans residues 901–902 (PM). A helical transmembrane segment spans residues 903–923 (PVLYGVFLYMGVSSLQGIQFF). At 924–960 (DRLKLFGMPAKHQPDFIYLRHVPLRKVHLFTLVQLTC) the chain is on the extracellular side. A helical transmembrane segment spans residues 961–981 (LVLLWVIKASPAAIVFPMMVL). At 982–1089 (ALVFVRKVMD…GNTKEKSPFN (108 aa)) the chain is on the cytoplasmic side.

It belongs to the anion exchanger (TC 2.A.31) family. Homodimer. As to expression, expressed in the hippocampal neurons (at protein level). Highly expressed in brain with lower levels in lung, kidney and heart. In the kidney, there is high expression in the inner medulla, localized to the inner medullary collecting duct. In the brain, there seems to be three transcripts each having a different expression pattern. The smaller 3kb transcript has highest expression levels in the thalamus and the largest 9.5kb transcript has highest levels in the substantia nigra. The middle transcript of 4.4kb, which is also the main transcript in kidney, is highly expressed in thalamus. Hence, the highest levels are observed in the thalamus, amygdala and caudate nucleus and very low expression was seen in the corpus callosum.

It localises to the cell membrane. The protein resides in the apical cell membrane. The protein localises to the basolateral cell membrane. It is found in the cytoplasmic vesicle. Its subcellular location is the secretory vesicle. It localises to the synaptic vesicle membrane. The enzyme catalyses 2 hydrogencarbonate(out) + chloride(in) + Na(+)(out) = 2 hydrogencarbonate(in) + chloride(out) + Na(+)(in). In terms of biological role, mediates electroneutral sodium- and carbonate-dependent chloride-HCO3(-) exchange with a Na(+):HCO3(-) stoichiometry of 2:1. Plays a major role in pH regulation in neurons. Mediates sodium reabsorption in the renal cortical collecting ducts. This is Electroneutral sodium bicarbonate exchanger 1 from Mus musculus (Mouse).